The following is a 329-amino-acid chain: Protein mlo2 (329 aa).

The UBR-type zinc finger occupies 33–104 (DTCTYSMGYL…HSIPCNLRKS (72 aa)). The PHD-type zinc finger occupies 120 to 179 (GRFCICDTVYNPETEEGTMFQCILCEDWFHEKCLQKTNKGIAIPDAETFEWLVCSECSEK).

Belongs to the UBR7 family.

Functionally, not known, interfere with mitotic chromosome segregation when overexpressed. This Schizosaccharomyces pombe (strain 972 / ATCC 24843) (Fission yeast) protein is Protein mlo2 (mlo2).